The primary structure comprises 707 residues: Polyribonucleotide nucleotidyltransferase (707 aa).

Residues aspartate 488 and aspartate 494 each contribute to the Mg(2+) site. Positions 555 to 615 constitute a KH domain; that stretch reads PIIKVTKIDP…ENVDNAIALI (61 aa). Residues 625-692 form the S1 motif domain; that stretch reads GEILEGKITR…DLGRLQFKRV (68 aa).

It belongs to the polyribonucleotide nucleotidyltransferase family. Requires Mg(2+) as cofactor.

Its subcellular location is the cytoplasm. It carries out the reaction RNA(n+1) + phosphate = RNA(n) + a ribonucleoside 5'-diphosphate. Its function is as follows. Involved in mRNA degradation. Catalyzes the phosphorolysis of single-stranded polyribonucleotides processively in the 3'- to 5'-direction. This chain is Polyribonucleotide nucleotidyltransferase, found in Thermotoga neapolitana (strain ATCC 49049 / DSM 4359 / NBRC 107923 / NS-E).